The primary structure comprises 280 residues: 1-cyclohexenylcarbonyl-CoA reductase (280 aa).

NADP(+) contacts are provided by residues 22–25, 71–72, and Asn98; these read SRGI and DV. Catalysis depends on proton acceptor residues Tyr158 and Lys165. Residues Lys165 and 194-196 contribute to the NADP(+) site; that span reads IDS.

This sequence belongs to the short-chain dehydrogenases/reductases (SDR) family. As to quaternary structure, homodimer.

It carries out the reaction (4R,5R)-4,5-dihydroxycyclohex-2-ene-1-carbonyl-CoA + NADP(+) = (3R,4R)-3,4-dihydroxycyclohexa-1,5-diene-1-carbonyl-CoA + NADPH + H(+). The catalysed reaction is (3S)-3-hydroxycyclohexane-1-carbonyl-CoA + NADP(+) = (5S)-5-hydroxycyclohex-1-ene-1-carbonyl-CoA + NADPH + H(+). It catalyses the reaction cyclohexane-1-carbonyl-CoA + NADP(+) = cyclohex-1-ene-1-carbonyl-CoA + NADPH + H(+). It functions in the pathway antibiotic biosynthesis. Inhibited by the thiol inhibitors p-chloromercuribenzoate, N-ethylmaleimide and iodoacetamide. Also inhibited by various divalent cations. Involved in the biosynthesis of the antifungal antibiotic ansatrienin A (mycotrienin I). Catalyzes three of the reductive steps involved in the formation of the cyclohexanecarboxylic acid (CHC) moiety of ansatrienin from shikimic acid. Can use 3,4-dihydroxycyclohexa-1,5-diene-1-carbonyl-CoA, 5-hydroxycyclohex-1-ene-1-carbonyl-CoA and cyclohex-1-ene-1-carbonyl-CoA as substrates. The sequence is that of 1-cyclohexenylcarbonyl-CoA reductase from Streptomyces collinus.